The following is a 307-amino-acid chain: Aspartate carbamoyltransferase catalytic subunit (307 aa).

Arg-56 and Thr-57 together coordinate carbamoyl phosphate. Lys-84 contacts L-aspartate. Arg-106, His-136, and Gln-139 together coordinate carbamoyl phosphate. L-aspartate-binding residues include Arg-169 and Arg-221. The carbamoyl phosphate site is built by Ala-262 and Pro-263.

It belongs to the aspartate/ornithine carbamoyltransferase superfamily. ATCase family. Heterododecamer (2C3:3R2) of six catalytic PyrB chains organized as two trimers (C3), and six regulatory PyrI chains organized as three dimers (R2).

It carries out the reaction carbamoyl phosphate + L-aspartate = N-carbamoyl-L-aspartate + phosphate + H(+). It participates in pyrimidine metabolism; UMP biosynthesis via de novo pathway; (S)-dihydroorotate from bicarbonate: step 2/3. Catalyzes the condensation of carbamoyl phosphate and aspartate to form carbamoyl aspartate and inorganic phosphate, the committed step in the de novo pyrimidine nucleotide biosynthesis pathway. This chain is Aspartate carbamoyltransferase catalytic subunit, found in Streptococcus pneumoniae serotype 2 (strain D39 / NCTC 7466).